A 376-amino-acid chain; its full sequence is Succinyl-diaminopimelate desuccinylase (376 aa).

Zn(2+) is bound at residue histidine 67. The active site involves aspartate 69. Position 100 (aspartate 100) interacts with Zn(2+). The Proton acceptor role is filled by glutamate 134. Residues glutamate 135, glutamate 163, and histidine 349 each coordinate Zn(2+).

The protein belongs to the peptidase M20A family. DapE subfamily. As to quaternary structure, homodimer. Zn(2+) serves as cofactor. Co(2+) is required as a cofactor.

It carries out the reaction N-succinyl-(2S,6S)-2,6-diaminopimelate + H2O = (2S,6S)-2,6-diaminopimelate + succinate. It participates in amino-acid biosynthesis; L-lysine biosynthesis via DAP pathway; LL-2,6-diaminopimelate from (S)-tetrahydrodipicolinate (succinylase route): step 3/3. Catalyzes the hydrolysis of N-succinyl-L,L-diaminopimelic acid (SDAP), forming succinate and LL-2,6-diaminopimelate (DAP), an intermediate involved in the bacterial biosynthesis of lysine and meso-diaminopimelic acid, an essential component of bacterial cell walls. This Actinobacillus succinogenes (strain ATCC 55618 / DSM 22257 / CCUG 43843 / 130Z) protein is Succinyl-diaminopimelate desuccinylase.